The following is a 591-amino-acid chain: Solute carrier family 40 member 2, chloroplastic (591 aa).

A chloroplast-targeting transit peptide spans M1 to D66. The next 11 membrane-spanning stretches (helical) occupy residues W159–F179, G206–M226, W242–V262, L293–V313, I318–N338, V391–L411, P419–I439, A452–W472, L482–V502, L518–I540, and F547–L569.

It belongs to the ferroportin (FP) (TC 2.A.100) family. SLC40A subfamily.

The protein localises to the membrane. The protein resides in the plastid. Its subcellular location is the chloroplast envelope. Its function is as follows. May be involved in iron transport and iron homeostasis. The sequence is that of Solute carrier family 40 member 2, chloroplastic from Oryza sativa subsp. japonica (Rice).